The primary structure comprises 378 residues: Holliday junction branch migration complex subunit RuvB 1 (378 aa).

Over residues 1-12 (MAIISSRDTGQN) the composition is skewed to polar residues. Residues 1 to 62 (MAIISSRDTG…PGEAQEESLR (62 aa)) are disordered. Residues 13 to 222 (AEGPKRRQQK…FGHVQRLRFY (210 aa)) form a large ATPase domain (RuvB-L) region. Residues leucine 61, arginine 62, glycine 103, lysine 106, threonine 107, threonine 108, 169 to 171 (EDF), arginine 212, tyrosine 222, and arginine 259 contribute to the ATP site. Residue threonine 107 coordinates Mg(2+). A small ATPAse domain (RuvB-S) region spans residues 223-293 (EPHELVQIVL…VAAAALELFQ (71 aa)). The head domain (RuvB-H) stretch occupies residues 296–378 (PMGLDWIDRK…EAQSPLPLWS (83 aa)). DNA contacts are provided by arginine 351 and arginine 356.

This sequence belongs to the RuvB family. Homohexamer. Forms an RuvA(8)-RuvB(12)-Holliday junction (HJ) complex. HJ DNA is sandwiched between 2 RuvA tetramers; dsDNA enters through RuvA and exits via RuvB. An RuvB hexamer assembles on each DNA strand where it exits the tetramer. Each RuvB hexamer is contacted by two RuvA subunits (via domain III) on 2 adjacent RuvB subunits; this complex drives branch migration. In the full resolvosome a probable DNA-RuvA(4)-RuvB(12)-RuvC(2) complex forms which resolves the HJ.

The protein localises to the cytoplasm. The catalysed reaction is ATP + H2O = ADP + phosphate + H(+). Functionally, the RuvA-RuvB-RuvC complex processes Holliday junction (HJ) DNA during genetic recombination and DNA repair, while the RuvA-RuvB complex plays an important role in the rescue of blocked DNA replication forks via replication fork reversal (RFR). RuvA specifically binds to HJ cruciform DNA, conferring on it an open structure. The RuvB hexamer acts as an ATP-dependent pump, pulling dsDNA into and through the RuvAB complex. RuvB forms 2 homohexamers on either side of HJ DNA bound by 1 or 2 RuvA tetramers; 4 subunits per hexamer contact DNA at a time. Coordinated motions by a converter formed by DNA-disengaged RuvB subunits stimulates ATP hydrolysis and nucleotide exchange. Immobilization of the converter enables RuvB to convert the ATP-contained energy into a lever motion, pulling 2 nucleotides of DNA out of the RuvA tetramer per ATP hydrolyzed, thus driving DNA branch migration. The RuvB motors rotate together with the DNA substrate, which together with the progressing nucleotide cycle form the mechanistic basis for DNA recombination by continuous HJ branch migration. Branch migration allows RuvC to scan DNA until it finds its consensus sequence, where it cleaves and resolves cruciform DNA. The protein is Holliday junction branch migration complex subunit RuvB 1 of Synechococcus sp. (strain JA-3-3Ab) (Cyanobacteria bacterium Yellowstone A-Prime).